A 570-amino-acid polypeptide reads, in one-letter code: 2-succinyl-5-enolpyruvyl-6-hydroxy-3-cyclohexene-1-carboxylate synthase (570 aa).

The protein belongs to the TPP enzyme family. MenD subfamily. Homodimer. It depends on Mg(2+) as a cofactor. Requires Mn(2+) as cofactor. Thiamine diphosphate is required as a cofactor.

The enzyme catalyses isochorismate + 2-oxoglutarate + H(+) = 5-enolpyruvoyl-6-hydroxy-2-succinyl-cyclohex-3-ene-1-carboxylate + CO2. The protein operates within quinol/quinone metabolism; 1,4-dihydroxy-2-naphthoate biosynthesis; 1,4-dihydroxy-2-naphthoate from chorismate: step 2/7. It participates in quinol/quinone metabolism; menaquinone biosynthesis. Catalyzes the thiamine diphosphate-dependent decarboxylation of 2-oxoglutarate and the subsequent addition of the resulting succinic semialdehyde-thiamine pyrophosphate anion to isochorismate to yield 2-succinyl-5-enolpyruvyl-6-hydroxy-3-cyclohexene-1-carboxylate (SEPHCHC). The chain is 2-succinyl-5-enolpyruvyl-6-hydroxy-3-cyclohexene-1-carboxylate synthase from Vibrio cholerae serotype O1 (strain ATCC 39541 / Classical Ogawa 395 / O395).